Here is a 99-residue protein sequence, read N- to C-terminus: Aphid transmission protein (99 aa).

This sequence belongs to the caulimoviridae ORF II family.

In terms of biological role, this protein is involved in virus transmission. This chain is Aphid transmission protein, found in Cauliflower mosaic virus (strain W260) (CaMV).